Here is a 78-residue protein sequence, read N- to C-terminus: Consomatin Te1 (78 aa).

The signal sequence occupies residues 1-22 (MQTAYWMMVMMMVWITAPLSEG). Residues 23–56 (GQLNDVIRGLVPDNLAPQLVLQSLDSRRHPHGIR) constitute a propeptide that is removed on maturation. An intrachain disulfide couples Cys-63 to Cys-68. Trp-65 is subject to D-tryptophan. Residues Pro-69, Pro-70, and Pro-72 each carry the 4-hydroxyproline modification. Positions 74-78 (RRLGS) are excised as a propeptide.

It belongs to the conotoxin C superfamily. Consomatin family. In terms of tissue distribution, expressed by the venom duct.

Its subcellular location is the secreted. Its function is as follows. Moderately activates human somatostatin receptors (SSTR) with a preferential activation of SSTR1 and SSTR4. In vivo, does not cause behavioral changes in mice within a few minutes of intracranial injection, but causes a progressive loss of movement thereafter. Four to five hours after injection, mice recover, even with the highest dose tested. Shows antinociception and antihyperalgesia activities in two mouse models of acute pain, most probably by acting outside the central nervous system. The chain is Consomatin Te1 from Conus terebra (Sea snail).